Reading from the N-terminus, the 762-residue chain is Dolichyl-phosphate-mannose--protein mannosyltransferase 4 (762 aa).

Over residues 1-10 (MSVPKKRNHG) the composition is skewed to basic residues. Residues 1 to 24 (MSVPKKRNHGKLPPSTKDVDDPSL) form a disordered region. The Lumenal portion of the chain corresponds to 1–53 (MSVPKKRNHGKLPPSTKDVDDPSLKYTKAAPKCEQVAEHWLLQPLPEPESRYS). Residues 54–74 (FWVTIVTLLAFAARFYKIWYP) form a helical membrane-spanning segment. Over 75–136 (KEVVFDEVHF…IGYSYETHPA (62 aa)) the chain is Cytoplasmic. Residues 137-157 (PYIAYRSFNAILGTLTVPIMF) traverse the membrane as a helical segment. At 158-166 (NTLKELNFR) the chain is on the lumenal side. A helical membrane pass occupies residues 167–187 (AITCAFASLLVAIDTAHVTET). The Cytoplasmic portion of the chain corresponds to 188-189 (RL). The chain crosses the membrane as a helical span at residues 190 to 210 (ILLDAILIISIAATMYCYVRF). The Lumenal portion of the chain corresponds to 211-217 (YKCQLRQ). A helical transmembrane segment spans residues 218–238 (PFTWSWYIWLHATGLSLSFVI). The Cytoplasmic segment spans residues 239–242 (STKY). The helical transmembrane segment at 243 to 263 (VGVMTYSAIGFAAVVNLWQLL) threads the bilayer. Residues 264–283 (DIKAGLSLRQFMRHFSKRLN) are Lumenal-facing. The chain crosses the membrane as a helical span at residues 284 to 304 (GLVLIPFVIYLFWFWVHFTVL). Residues 305–593 (NTSGPGDAFM…NGDEKKQIYF (289 aa)) lie on the Cytoplasmic side of the membrane. 3 MIR domains span residues 331–391 (SKTV…VLPP), 399–458 (GQAV…FQPL), and 464–521 (GHVL…VDEI). A helical membrane pass occupies residues 594–614 (IGNIIGWWFQVISLAVFVGII). Residues 615–635 (VADLITRHRGYYALNKMTREK) lie on the Lumenal side of the membrane. The chain crosses the membrane as a helical span at residues 636–656 (LYGPLMFFFVSWCCHYFPFFL). Residues 657–716 (MARQKFLHHYLPAHLIACLFSGALWEVIFSDCKSLDLEKDEDISGASYERNPKVYVKPYT) are Cytoplasmic-facing. The helical transmembrane segment at 717-737 (VFLVCVSCAVAWFFVYFSPLV) threads the bilayer. Residues 738 to 762 (YGDVSLSPSEVVSREWFDIELNFSK) lie on the Lumenal side of the membrane. Asn759 carries N-linked (GlcNAc...) asparagine glycosylation.

It belongs to the glycosyltransferase 39 family. As to quaternary structure, forms a functional homodimer and may form a heterodimer with PMT6. Interacts with RCR1.

The protein localises to the endoplasmic reticulum membrane. It carries out the reaction a di-trans,poly-cis-dolichyl beta-D-mannosyl phosphate + L-seryl-[protein] = 3-O-(alpha-D-mannosyl)-L-seryl-[protein] + a di-trans,poly-cis-dolichyl phosphate + H(+). The enzyme catalyses a di-trans,poly-cis-dolichyl beta-D-mannosyl phosphate + L-threonyl-[protein] = 3-O-(alpha-D-mannosyl)-L-threonyl-[protein] + a di-trans,poly-cis-dolichyl phosphate + H(+). Its pathway is protein modification; protein glycosylation. Protein O-mannosyltransferase involved in O-glycosylation which is essential for cell wall rigidity. Forms a homodimeric complex to transfer mannose from Dol-P-mannose to Ser or Thr residues on proteins. Specifically acts on secretory proteins with an ER-luminally oriented Ser/Thr-rich region flanked by a membrane anchor such as FUS1, AXL2, GAS1, KEX2, MID2, WSC1, WSC2, OPY2, PRM5, RAX2, or YNL176. The polypeptide is Dolichyl-phosphate-mannose--protein mannosyltransferase 4 (Saccharomyces cerevisiae (strain ATCC 204508 / S288c) (Baker's yeast)).